The chain runs to 86 residues: Mu-theraphotoxin-Hhn1b 3 (86 aa).

Residues 1-21 (MKASMFLALTGLALLFVVCYA) form the signal peptide. Positions 22 to 49 (SESEEKEFSNELLSSVLAVDDNSKGEER) are excised as a propeptide. Intrachain disulfides connect C51–C66, C58–C73, and C65–C80. I84 carries the post-translational modification Isoleucine amide.

It belongs to the neurotoxin 10 (Hwtx-1) family. 22 (Htx-4) subfamily. Monomer. Expressed by the venom gland.

Its subcellular location is the secreted. Its function is as follows. Neurotoxin. Selectively blocks neuronal tetrodotoxin-sensitive voltage-gated sodium channels (Nav) with an IC(50) of 44.6 nM. Does not affect tetrodotoxin-resistant voltage-gated sodium channels or calcium channels. The polypeptide is Mu-theraphotoxin-Hhn1b 3 (Cyriopagopus hainanus (Chinese bird spider)).